A 292-amino-acid chain; its full sequence is NAD kinase (292 aa).

The active-site Proton acceptor is the Asp-73. Residues 73-74, 147-148, His-158, Arg-175, Asp-177, 188-193, and Gln-247 contribute to the NAD(+) site; these read DG, NE, and TAYSLS.

This sequence belongs to the NAD kinase family. It depends on a divalent metal cation as a cofactor.

The protein localises to the cytoplasm. It catalyses the reaction NAD(+) + ATP = ADP + NADP(+) + H(+). Its function is as follows. Involved in the regulation of the intracellular balance of NAD and NADP, and is a key enzyme in the biosynthesis of NADP. Catalyzes specifically the phosphorylation on 2'-hydroxyl of the adenosine moiety of NAD to yield NADP. This Edwardsiella ictaluri (strain 93-146) protein is NAD kinase.